The following is a 64-amino-acid chain: Potassium channel toxin kappa-KTx 3.4 (64 aa).

The first 26 residues, 1 to 26, serve as a signal peptide directing secretion; that stretch reads MKSTLMTASLLILVLLSIIDYASVYA. Positions 27–36 are excised as a propeptide; that stretch reads EFIDSEISLE. Intrachain disulfides connect Cys43-Cys61 and Cys47-Cys57.

It belongs to the short scorpion toxin superfamily. Potassium channel inhibitor kappa-KTx family. Kappa-KTx 3 subfamily. Expressed by the venom gland.

Its subcellular location is the secreted. Its function is as follows. Potassium channel inhibitor (Kv). The chain is Potassium channel toxin kappa-KTx 3.4 from Heterometrus petersii (Asian forest scorpion).